A 318-amino-acid chain; its full sequence is Xanthocillin biosynthesis cluster transcription factor xanC (318 aa).

The segment covering 1 to 27 has biased composition (basic and acidic residues); the sequence is MHSQTTKDEQSKDDSSNEKQDAIERRR. A disordered region spans residues 1 to 39; it reads MHSQTTKDEQSKDDSSNEKQDAIERRRLQNRLSQRNHRR. A bZIP domain is found at 20–52; that stretch reads QDAIERRRLQNRLSQRNHRRKIRDRIAKLQERV. Residues 25–40 form a basic motif region; the sequence is RRRLQNRLSQRNHRRK. The tract at residues 41-48 is leucine-zipper; the sequence is IRDRIAKL. Disordered stretches follow at residues 71-107, 123-171, and 269-318; these read PPAA…QRNV, PSSS…FSLD, and GRHC…SMML. 2 stretches are compositionally biased toward low complexity: residues 123–139 and 147–171; these read PSSS…PFDL and STNS…FSLD. A compositionally biased stretch (polar residues) spans 293–318; that stretch reads APSSTPFCPLHPSQSSSLDNYQSMML.

This sequence belongs to the bZIP family.

The protein localises to the nucleus. In terms of biological role, transcription regulator that specifically up-regulates the gene cluster that mediates the biosynthesis of the isocyanide xanthocillin and its derivatives. The sequence is that of Xanthocillin biosynthesis cluster transcription factor xanC from Aspergillus fumigatus (strain ATCC MYA-4609 / CBS 101355 / FGSC A1100 / Af293) (Neosartorya fumigata).